We begin with the raw amino-acid sequence, 381 residues long: 8-amino-7-oxononanoate synthase (381 aa).

Substrate is bound at residue Arg27. 105–106 (GY) contacts pyridoxal 5'-phosphate. His130 serves as a coordination point for substrate. Pyridoxal 5'-phosphate contacts are provided by residues Ser176, 201–204 (DEAH), and 232–235 (TLSK). The residue at position 235 (Lys235) is an N6-(pyridoxal phosphate)lysine. Position 345 (Thr345) interacts with substrate.

This sequence belongs to the class-II pyridoxal-phosphate-dependent aminotransferase family. BioF subfamily. Homodimer. The cofactor is pyridoxal 5'-phosphate.

The enzyme catalyses 6-carboxyhexanoyl-[ACP] + L-alanine + H(+) = (8S)-8-amino-7-oxononanoate + holo-[ACP] + CO2. It functions in the pathway cofactor biosynthesis; biotin biosynthesis. Catalyzes the decarboxylative condensation of pimeloyl-[acyl-carrier protein] and L-alanine to produce 8-amino-7-oxononanoate (AON), [acyl-carrier protein], and carbon dioxide. This Mycobacterium avium (strain 104) protein is 8-amino-7-oxononanoate synthase.